Here is a 151-residue protein sequence, read N- to C-terminus: Large ribosomal subunit protein bL9 (151 aa).

This sequence belongs to the bacterial ribosomal protein bL9 family.

Its function is as follows. Binds to the 23S rRNA. The sequence is that of Large ribosomal subunit protein bL9 from Mycoplasmopsis agalactiae (strain NCTC 10123 / CIP 59.7 / PG2) (Mycoplasma agalactiae).